The primary structure comprises 2342 residues: Outer kinetochore KNL1 complex subunit KNL1 (2342 aa).

The tract at residues 1-56 (MDGVSSEANEENDNIERPVRRRHSSILKPPRSPLQDLRGGNERVQESNALRNKKNS) is disordered. A may mediate oligomerization region spans residues 1–250 (MDGVSSEANE…FNDFIKRLKT (250 aa)). Positions 1–728 (MDGVSSEANE…QSLFSTTKPL (728 aa)) are interaction with BUB1 and BUB1B. Interaction with microtubules regions lie at residues 17–34 (RPVR…RSPL) and 53–80 (KKNS…VRKS). The segment at 23-80 (HSSILKPPRSPLQDLRGGNERVQESNALRNKKNSRRVSFADTIKVFQTESHMKIVRKS) is interaction with PP1CA; contains the protein phosphatase 1 (PP1) interaction motifs SILK, RVXF and phi-phi. A Phosphoserine; by AURKB modification is found at serine 24. Serine 32 bears the Phosphoserine mark. Serine 60 is subject to Phosphoserine; by AURKB. Residues 174–190 (ENQMDLTSSHTVMITKG) form an interaction with BUB1 region. The interval 210-226 (ANLKLHTEDSRMKKEVN) is interaction with BUB1B. The residue at position 539 (threonine 539) is a Phosphothreonine. Phosphoserine occurs at positions 578 and 584. Threonine 586 carries the phosphothreonine modification. The tract at residues 620 to 646 (APESTSESHSQSKSSSDECEEITKSRN) is disordered. Over residues 622-633 (ESTSESHSQSKS) the composition is skewed to low complexity. Phosphoserine is present on serine 767. The tract at residues 855–1201 (EDESVQKPKF…VTDSHTVFID (347 aa)) is 2 X 104 AA approximate repeats. Repeat 1 spans residues 885 to 989 (DKTIVFSEDD…MTESHTVFID (105 aa)). The residue at position 901 (threonine 901) is a Phosphothreonine. Phosphoserine occurs at positions 956, 1039, 1076, and 1088. Copy 2 of the repeat occupies 1099-1201 (DKTIVFSENH…VTDSHTVFID (103 aa)). Serine 1448 carries the post-translational modification Phosphoserine. Residues 1639 to 1662 (SNAKDSRDEENKKSHNGAETTSLP) are disordered. Residues 1642–1651 (KDSRDEENKK) are compositionally biased toward basic and acidic residues. Phosphoserine occurs at positions 1675 and 1773. The Nuclear localization signal signature appears at 1789–1803 (TWVQEEEDIHKEKKI). Serine 1831 carries the phosphoserine modification. 2 positions are modified to phosphoserine; by TTK: serine 1831 and serine 1834. 2 positions are modified to phosphoserine: serine 1845 and serine 1860. Residues 1981 to 2108 (KMRHCSDKEL…LLELEVQKEQ (128 aa)) are required for interaction with ZWINT. Residues 2024 to 2133 (VQSAQNEREK…EELLDQLSLS (110 aa)) are a coiled coil. Residues 2091–2311 (EEEELQRNLL…GNTSQDDIAT (221 aa)) are interaction with NSL1, DSN1 and required for assembly into the outer kinetochore.

As to quaternary structure, component of the KNL1 complex composed of KNL1 and ZWINT. Part of the ten-subunit outer kinetochore KMN network that includes the KNL1, MIS12 and NDC80 complexes; a bioriented kinetochore contains approximately 150 copies of the network. Interacts (via C-terminus) with the MIS12 complex subunits NSL1 (via C-terminus), PMF1 and DSN1; the interaction is direct. Interacts (via N-terminal region) with BUB1B (via BUB1 N-terminal domain); the interaction is direct and is required for cell cycle arrest upon activation of the mitotic spindle assembly checkpoint. Interacts (via N-terminal region) with BUB1 (via BUB1 N-terminal domain); the interaction is direct. Interacts with the protein phosphatase PP1 subunit PPP1CA; the interaction is direct and mutually exclusive with binding to microtubules. Interacts with the protein phosphatase PP1 subunit PPP1CC; the interaction is direct and mutually exclusive with binding to microtubules. Phosphorylation by AURKB negatively regulates its interaction with protein phosphatase 1 (PP1) subunit PPP1CA and with microtubules. In terms of tissue distribution, highly expressed in testis, where it is localized in germ cells, in particular in spermatocytes and in the pre-acrosome of round spermatids. Detected in the acrosome of ejaculated spermatozoa. Detected in adult thymus, bone marrow, colon, small intestine, appendix and placenta, and in fetal liver and thymus.

It is found in the nucleus. Its subcellular location is the chromosome. It localises to the centromere. The protein localises to the kinetochore. The protein resides in the cytoplasm. Acts as a component of the outer kinetochore KNL1 complex that serves as a docking point for spindle assembly checkpoint components and mediates microtubule-kinetochore interactions. Kinetochores, consisting of a centromere-associated inner segment and a microtubule-contacting outer segment, play a crucial role in chromosome segregation by mediating the physical connection between centromeric DNA and spindle microtubules. The outer kinetochore is made up of the ten-subunit KMN network, comprising the MIS12, NDC80 and KNL1 complexes, and auxiliary microtubule-associated components; together they connect the outer kinetochore with the inner kinetochore, bind microtubules, and mediate interactions with mitotic checkpoint proteins that delay anaphase until chromosomes are bioriented on the spindle. Required for kinetochore binding by a distinct subset of kMAPs (kinetochore-bound microtubule-associated proteins) and motors. Acts in coordination with CENPK to recruit the NDC80 complex to the outer kinetochore. Can bind either to microtubules or to the protein phosphatase 1 (PP1) catalytic subunits PPP1CA and PPP1CC (via overlapping binding sites), it has higher affinity for PP1. Recruits MAD2L1 to the kinetochore and also directly links BUB1 and BUB1B to the kinetochore. In addition to orienting mitotic chromosomes, it is also essential for alignment of homologous chromosomes during meiotic metaphase I. In meiosis I, required to activate the spindle assembly checkpoint at unattached kinetochores to correct erroneous kinetochore-microtubule attachments. This Homo sapiens (Human) protein is Outer kinetochore KNL1 complex subunit KNL1.